The primary structure comprises 273 residues: Dermonecrotic toxin LhSicTox-alphaIA2bvi (273 aa).

The active site involves histidine 5. Mg(2+)-binding residues include glutamate 25 and aspartate 27. Catalysis depends on histidine 41, which acts as the Nucleophile. Intrachain disulfides connect cysteine 45–cysteine 51 and cysteine 47–cysteine 190. Mg(2+) is bound at residue aspartate 85.

This sequence belongs to the arthropod phospholipase D family. Class II subfamily. Requires Mg(2+) as cofactor. As to expression, expressed by the venom gland.

The protein localises to the secreted. It carries out the reaction an N-(acyl)-sphingosylphosphocholine = an N-(acyl)-sphingosyl-1,3-cyclic phosphate + choline. It catalyses the reaction an N-(acyl)-sphingosylphosphoethanolamine = an N-(acyl)-sphingosyl-1,3-cyclic phosphate + ethanolamine. The enzyme catalyses a 1-acyl-sn-glycero-3-phosphocholine = a 1-acyl-sn-glycero-2,3-cyclic phosphate + choline. The catalysed reaction is a 1-acyl-sn-glycero-3-phosphoethanolamine = a 1-acyl-sn-glycero-2,3-cyclic phosphate + ethanolamine. In terms of biological role, dermonecrotic toxins cleave the phosphodiester linkage between the phosphate and headgroup of certain phospholipids (sphingolipid and lysolipid substrates), forming an alcohol (often choline) and a cyclic phosphate. This toxin acts on sphingomyelin (SM). It may also act on ceramide phosphoethanolamine (CPE), lysophosphatidylcholine (LPC) and lysophosphatidylethanolamine (LPE), but not on lysophosphatidylserine (LPS), and lysophosphatidylglycerol (LPG). It acts by transphosphatidylation, releasing exclusively cyclic phosphate products as second products. Induces dermonecrosis, hemolysis, increased vascular permeability, edema, inflammatory response, and platelet aggregation. This chain is Dermonecrotic toxin LhSicTox-alphaIA2bvi, found in Loxosceles hirsuta (Recluse spider).